A 511-amino-acid polypeptide reads, in one-letter code: Zinc finger CCCH-type with G patch domain-containing protein (511 aa).

M1 bears the N-acetylmethionine mark. S70 carries the phosphoserine modification. The disordered stretch occupies residues 92 to 129; it reads PGAPCNDSETAPGSEVQPGSTSSALEEEEEDPDLEELS. A compositionally biased stretch (polar residues) spans 98-115; sequence DSETAPGSEVQPGSTSSA. Residues 116–127 show a composition bias toward acidic residues; that stretch reads LEEEEEDPDLEE. The C3H1-type zinc-finger motif lies at 174–200; the sequence is KSLKPCPFFLEGKCRFKENCRFSHGQV. The interval 266 to 291 is disordered; sequence PPLRTEATESSDSDTGDASDSSYARV. Phosphoserine is present on S276. Residue T280 is modified to Phosphothreonine. The G-patch domain maps to 313–359; that stretch reads TRGIGSKLLVKMGYEFGKGLGRHAEGRVEPIHAVVLPRGKSLDQCAE. At S353 the chain carries Phosphoserine. Disordered regions lie at residues 363-393 and 490-511; these read KKTK…PPRN and AQEA…MTEF. A compositionally biased stretch (basic and acidic residues) spans 491–511; sequence QEADLQRKQRKADTHRKMTEF.

Interacts with CHD4/Mi-2; the interaction is direct.

The protein localises to the nucleus. In terms of biological role, transcription repressor that specifically binds the 5'-GGAG[GA]A[GA]A-3' consensus sequence. Represses transcription by recruiting the chromatin multiprotein complex NuRD to target promoters. Negatively regulates expression of EGFR, a gene involved in cell proliferation, survival and migration. Its ability to repress genes of the EGFR pathway suggest it may act as a tumor suppressor. The sequence is that of Zinc finger CCCH-type with G patch domain-containing protein (Zgpat) from Mus musculus (Mouse).